Reading from the N-terminus, the 367-residue chain is MKTSPHRNTSAIVDLKAIRNNIEKFKKHINPNAEIWPAVKADAYGHGSVEVSKAVSDLVGGFCVSNLDEAIELRNHLVTKPILVLSGIVPEDVDIAAALNISLTAPSLEWLKLVVQEEAELSDLKIHIGVDSGMGRIGIRDVEEANQMIELADKYAINFEGIFTHFATADMADETKFKNQQARFNKIMAGLSRQPKFIHSTNTAAALWHKEQVQAIERLGISMYGLNPSGKTLELPFEIEPALSLVSELTHIKKIAAGETVGYGATYETSEETWIGTVPIGYADGWTRQMQGFKVLVDGKFCEIVGRVCMDQMMIKLDKSYPLGTKVTLIGRDKANEITTTDVADWRGTINYEVLCLLSDRIKRIYK.

Catalysis depends on lysine 40, which acts as the Proton acceptor; specific for D-alanine. N6-(pyridoxal phosphate)lysine is present on lysine 40. Position 136 (arginine 136) interacts with substrate. The active-site Proton acceptor; specific for L-alanine is the tyrosine 263. Methionine 310 provides a ligand contact to substrate.

The protein belongs to the alanine racemase family. Pyridoxal 5'-phosphate serves as cofactor.

The catalysed reaction is L-alanine = D-alanine. It participates in amino-acid biosynthesis; D-alanine biosynthesis; D-alanine from L-alanine: step 1/1. In terms of biological role, catalyzes the interconversion of L-alanine and D-alanine. May also act on other amino acids. This chain is Alanine racemase (alr), found in Lactococcus lactis subsp. cremoris (strain SK11).